The chain runs to 360 residues: Glucan endo-1,3-beta-glucosidase B (360 aa).

The N-terminal stretch at 1 to 25 is a signal peptide; it reads MATSQIAIIVLLGLLVATNIHITEA. A Pyrrolidone carboxylic acid modification is found at Gln-26. The active-site Proton donor is the Glu-120. Glu-265 serves as the catalytic Nucleophile. A propeptide spans 341–360 (removed in mature form); the sequence is VSERVWDITNSTASSLTSEI. Asn-350 is a glycosylation site (N-linked (GlcNAc...) asparagine).

This sequence belongs to the glycosyl hydrolase 17 family.

It localises to the vacuole. The catalysed reaction is Hydrolysis of (1-&gt;3)-beta-D-glucosidic linkages in (1-&gt;3)-beta-D-glucans.. Implicated in the defense of plants against pathogens. The protein is Glucan endo-1,3-beta-glucosidase B of Solanum lycopersicum (Tomato).